We begin with the raw amino-acid sequence, 505 residues long: Phosphoethanolamine N-methyltransferase (505 aa).

6 residues coordinate S-adenosyl-L-homocysteine: Gly76, Arg81, Asp97, Asp122, Val123, and Asn141. Residues Ser174, Ser179, Gly180, Arg184, and Tyr191 each coordinate phosphocholine. N-methylethanolamine phosphate-binding positions include 260 to 261 (QY) and Tyr269. Position 269 (Tyr269) interacts with phosphocholine. S-adenosyl-L-homocysteine-binding residues include Val278, Ser279, Gly305, Asp327, Asp353, Cys354, and Arg370. Phosphocholine-binding residues include Tyr401, Tyr415, Arg419, Tyr421, and Lys487. Residues Tyr401, Tyr415, 419–421 (RGY), and Lys487 each bind N-methylethanolamine phosphate.

It belongs to the class I-like SAM-binding methyltransferase superfamily. PEAMT family.

It carries out the reaction phosphoethanolamine + S-adenosyl-L-methionine = N-methylethanolamine phosphate + S-adenosyl-L-homocysteine + H(+). It catalyses the reaction N-methylethanolamine phosphate + S-adenosyl-L-methionine = N,N-dimethylethanolamine phosphate + S-adenosyl-L-homocysteine + H(+). The catalysed reaction is N,N-dimethylethanolamine phosphate + S-adenosyl-L-methionine = phosphocholine + S-adenosyl-L-homocysteine + H(+). It participates in phospholipid metabolism; phosphatidylcholine biosynthesis; phosphocholine from phosphoethanolamine: step 1/1. With respect to regulation, inhibited by phosphatidic acid. Involved in phosphocholine biosynthesis. Catalyzes the N-methylation of phosphoethanolamine, phosphomonomethylethanolamine and phosphodimethylethanolamine, the three methylation steps required to convert phosphoethanolamine to phosphocholine (PC). The sequence is that of Phosphoethanolamine N-methyltransferase from Triticum aestivum (Wheat).